The primary structure comprises 65 residues: Toxin NaTx-22 (65 aa).

In terms of domain architecture, LCN-type CS-alpha/beta spans 1-64 (KDGYPVIKTT…TYPIPGKTCK (64 aa)). Disulfide bonds link cysteine 12/cysteine 63, cysteine 16/cysteine 39, cysteine 25/cysteine 44, and cysteine 29/cysteine 46.

Belongs to the long (4 C-C) scorpion toxin superfamily. Sodium channel inhibitor family. As to expression, expressed by the venom gland.

It localises to the secreted. In terms of biological role, probable sodium channel inhibitor. This is Toxin NaTx-22 from Centruroides sculpturatus (Arizona bark scorpion).